The sequence spans 177 residues: Large ribosomal subunit protein uL6 (177 aa).

It belongs to the universal ribosomal protein uL6 family. Part of the 50S ribosomal subunit.

Functionally, this protein binds to the 23S rRNA, and is important in its secondary structure. It is located near the subunit interface in the base of the L7/L12 stalk, and near the tRNA binding site of the peptidyltransferase center. The protein is Large ribosomal subunit protein uL6 of Methylocella silvestris (strain DSM 15510 / CIP 108128 / LMG 27833 / NCIMB 13906 / BL2).